The following is a 290-amino-acid chain: uncharacterized protein (290 aa).

The protein resides in the cell membrane. It is found in the membrane raft. This is an uncharacterized protein from Bacillus subtilis (strain 168).